Consider the following 126-residue polypeptide: Cysteine-rich tail protein 1 (126 aa).

Positions 1 to 89 (MDPHETLVKN…PAGLAYAGPP (89 aa)) are disordered.

The protein belongs to the CYSRT1 family. As to quaternary structure, interacts with components of the late cornfied envelope (LCE).

The protein localises to the cornified envelope. Its function is as follows. Component of the stratum corneum that may contribute to epidermal antimicrobial host defenses. The chain is Cysteine-rich tail protein 1 (CYSRT1) from Bos taurus (Bovine).